A 602-amino-acid polypeptide reads, in one-letter code: Protein indeterminate-domain 5, chloroplastic (602 aa).

Low complexity-rich tracts occupy residues 1–10 (MAASSSSAAS) and 21–30 (HLLPPNSSAA). Residues 1–50 (MAASSSSAASFFGVRQDDQSHLLPPNSSAAAPPPPPPHHQAPLPPLEAPP) constitute a chloroplast transit peptide. Positions 1 to 65 (MAASSSSAAS…NQPRTPNSDA (65 aa)) are disordered. Over residues 31–48 (APPPPPPHHQAPLPPLEA) the composition is skewed to pro residues. Residue threonine 60 is modified to Phosphothreonine. At serine 71 the chain carries Phosphoserine. C2H2-type zinc fingers lie at residues 81–103 (FICE…RRGH) and 122–152 (YLCP…YRKH). A C2H2-type 2; degenerate zinc finger spans residues 157 to 180 (WKCDKCSKRYAVQSDWKAHSKTCG). Zn(2+)-binding residues include cysteine 159, cysteine 162, histidine 175, cysteine 179, cysteine 186, cysteine 188, histidine 201, and cysteine 205. The CCHC-type 2; atypical zinc finger occupies 184 to 207 (YRCDCGTLFSRRDSFITHRAFCDA). The interval 194-206 (RRDSFITHRAFCD) is SHR-binding. Disordered regions lie at residues 443–467 (KAAQ…NNAS) and 537–602 (KSMS…HASF). Composition is skewed to low complexity over residues 448-467 (GSTS…NNAS), 546-560 (QQQQ…QQQQ), and 570-579 (SSSDSADRSS).

In terms of assembly, binds to RGA and SCL3 competitively. As to expression, highly expressed in leaf tissues.

The protein localises to the plastid. It localises to the chloroplast. Its function is as follows. Transcription factor acting as a positive regulator of the starch synthase SS4. Controls chloroplast development and starch granule formation. Binds DNA via its zinc fingers. Recognizes and binds to SCL3 promoter sequence 5'-AGACAA-3' to promote its expression when in complex with RGA. This chain is Protein indeterminate-domain 5, chloroplastic, found in Arabidopsis thaliana (Mouse-ear cress).